A 404-amino-acid chain; its full sequence is Protrudin (404 aa).

Residues 1–25 form a disordered region; the sequence is MQSSDRDLSGPEASPSVMPEVLSEC. At 1-63 the chain is on the cytoplasmic side; it reads MQSSDRDLSG…LKDAGDGVRY (63 aa). The sufficient for homooligomerization stretch occupies residues 1 to 92; that stretch reads MQSSDRDLSG…LFLTLNEGAW (92 aa). The segment at 1-205 is sufficient for localization to endoplasmic reticulum tubular network and for interactions with REEP1, REEP5, ATL1, ATL2, ATL3 and SPAST; that stretch reads MQSSDRDLSG…LYLLPLCWVL (205 aa). Residues 51–64 are necessary for interaction with RAB11A and function in neurite outgrowth; the sequence is LEPLKDAGDGVRYL. A helical transmembrane segment spans residues 64–85; that stretch reads LLRWQMPLCSLLTCLGLNILFL. Over 86 to 90 the chain is Lumenal; sequence TLNEG. The helical transmembrane segment at 91-109 threads the bilayer; that stretch reads AWYSVGALIISVPALLGYL. The Cytoplasmic segment spans residues 110 to 187; the sequence is QEVCRAQLPE…NPVVSSQFYG (78 aa). Residues 188–208 constitute an intramembrane region (helical); the sequence is ALLGMVCMLYLLPLCWVLALL. The Cytoplasmic segment spans residues 209–404; the sequence is NSTLFLGNGE…CASCNQTLSK (196 aa). The segment at 259 to 299 is disordered; the sequence is DSTPAPTPTEDLTPGSVEEAEEAEPDEEFKDAIEEDDEGTP. The necessary for interaction with KIF5A stretch occupies residues 271–354; sequence TPGSVEEAEE…GCAATFSVLK (84 aa). A compositionally biased stretch (acidic residues) spans 276–299; sequence EEAEEAEPDEEFKDAIEEDDEGTP. The interval 286–292 is necessary for interaction with VAPA; the sequence is EFKDAIE. The FYVE-type zinc finger occupies 337 to 403; that stretch reads TNNFGNCAGC…VCASCNQTLS (67 aa). The Zn(2+) site is built by C343, C346, C359, C362, C367, C370, C395, and C398.

In terms of assembly, can form homooligomers (monomers, dimers and tetramers). Interacts with FKBP8; may negatively regulate ZFYVE27 phosphorylation. Interacts with VAPA (via MSP domain); may regulate ZFYVE27 retention in the endoplasmic reticulum and its function in cell projections formation. Interacts with VAPB (via MSP domain). Interacts with RAB11A (GDP-bound form); regulates RAB11A. Interacts with RAB11B (GDP-bound form), REEP1, REEP5, ATL1, ATL2, ATL3, SPAST, SURF4, KIF5A, KIF5B, KIF5C and RTN3. In terms of processing, phosphorylated. Phosphorylation is induced by NGF through the MAPK/ERK pathway and modulates interaction with RAB11A.

It localises to the recycling endosome membrane. It is found in the endoplasmic reticulum membrane. Its subcellular location is the cell projection. The protein localises to the growth cone membrane. Functionally, key regulator of RAB11-dependent vesicular trafficking during neurite extension through polarized membrane transport. Promotes axonal elongation and contributes to the establishment of neuronal cell polarity. Involved in nerve growth factor-induced neurite formation in VAPA-dependent manner. Contributes to both the formation and stabilization of the tubular ER network. Involved in ER morphogenesis by regulating the sheet-to-tubule balance and possibly the density of tubule interconnections. Acts as an adapter protein that facilitates the interaction of KIF5A with VAPA, VAPB, SURF4, RAB11A, RAB11B and RTN3 and the ZFYVE27-KIF5A complex contributes to the transport of these proteins in neurons. Can induce formation of neurite-like membrane protrusions in non-neuronal cells in a KIF5A/B-dependent manner. The protein is Protrudin (Zfyve27) of Rattus norvegicus (Rat).